The chain runs to 716 residues: Mitogen-activated protein kinase kinase kinase 5 (716 aa).

Positions 1 to 27 (MRWLPQISFSSPSSSPSSSLKPVASYS) are enriched in low complexity. 4 disordered regions span residues 1–42 (MRWL…DRFH), 74–98 (ASTS…VPRS), 119–180 (AANA…YWVN), and 238–302 (YDIT…VTNG). The segment covering 31–40 (DPDRNQDRDR) has biased composition (basic and acidic residues). A compositionally biased stretch (polar residues) spans 75-91 (STSSSTFDSGLTRSPSA). Residues 124 to 137 (GLDDRDRDPERLIS) are compositionally biased toward basic and acidic residues. Composition is skewed to polar residues over residues 138-150 (DRTS…TSVN), 162-173 (ENSSYQDFSPRN), and 242-251 (AFSTDNSPIH). Positions 263–273 (RSPQPSRPSSP) are enriched in low complexity. Residues 346-607 (WKKGKLIGRG…ASMLLEHRFL (262 aa)) enclose the Protein kinase domain. Residues 352–360 (IGRGTFGSV) and Lys-375 contribute to the ATP site. Residue Asp-472 is the Proton acceptor of the active site. Polar residues predominate over residues 610-633 (SLQPTSPSNSDVSQLFNGMNITEP). Positions 610-716 (SLQPTSPSNS…RRTGVTSDHL (107 aa)) are disordered. Residues Ser-617 and Ser-622 each carry the phosphoserine; by PBL27 modification. Basic and acidic residues predominate over residues 634 to 648 (SSRREKPNFKLDQVP). Composition is skewed to polar residues over residues 652 to 661 (NMTSSESESG) and 674 to 685 (LTGTVNRLSPRS). Ser-658 and Ser-660 each carry phosphoserine; by PBL27. Position 677 is a phosphothreonine; by PBL27 (Thr-677). The residue at position 685 (Ser-685) is a Phosphoserine; by PBL27. Residues 703 to 716 (SSDRRRTGVTSDHL) are compositionally biased toward basic and acidic residues.

The protein belongs to the protein kinase superfamily. STE Ser/Thr protein kinase family. MAP kinase kinase kinase subfamily. In terms of assembly, interacts with PBL27 at the plasma membrane; disassociation is induced by chitin perception by the CERK1 complex. Interacts with MKK2, MKK4, and MKK5 mainly in the cytosol. Post-translationally, phosphorylated by PBL27 during chitin-mediated signaling in a CERK1-dependent manner. Mostly expressed in flower buds. Also present in pollen, roots, leaves and seedlings, and, at low levels, in stems and immature siliques.

It is found in the cell membrane. Its subcellular location is the cytoplasm. The protein resides in the cytosol. It catalyses the reaction L-seryl-[protein] + ATP = O-phospho-L-seryl-[protein] + ADP + H(+). The enzyme catalyses L-threonyl-[protein] + ATP = O-phospho-L-threonyl-[protein] + ADP + H(+). Functionally, mitogen-activated protein kinase (MAPK) involved in the transduction of signal between the host cell surface chitin receptor complex CERK1-LYK5 and the intracellular MAPK cascade that leads to chitin-induced immunity. Phosphorylates and activates MAPK targets (e.g. MKK4, MKK5, and possibly MKK2) when phosphorylated by PBL27 after elicitation by chitin. Required for resistance to the fungus A.brassicicola. This chain is Mitogen-activated protein kinase kinase kinase 5, found in Arabidopsis thaliana (Mouse-ear cress).